Reading from the N-terminus, the 440-residue chain is Polyprenol-phosphate-mannose-dependent alpha-(1-2)-phosphatidylinositol mannoside mannosyltransferase (440 aa).

Helical transmembrane passes span 15–35 (LAPTIAWRVFQLLTLAGVLWV), 87–107 (LAAIAFAPFAWLSLPLASSAI), 109–129 (ATTLVLLIVATTIVLTRLDVW), 144–161 (AWLAAAMVAPAVIYLEPI), 164–184 (NFEFGQINVVLMTLVIADCVP), 193–213 (LLLGLAIALKLTPAVFLLYFL), 224–244 (TAATAVVASLAGFALAWSDSV), 281–301 (PRFILWVLACFAVLALTVWAA), 316–336 (APVLALVCVALFGLVVSPVSW), 360–380 (VWFTALTAAGLALTVWTPITL), and 395–415 (LAGGSYVWWAFAVIVVIGLVS). The tract at residues 419–440 (THTGDAHETDEPLVPLARGEAG) is disordered.

Belongs to the glycosyltransferase 87 family.

The protein localises to the cell membrane. Its pathway is phospholipid metabolism; phosphatidylinositol metabolism. Its function is as follows. Responsible for the addition of alpha-(1-2) mannose branches to the linear mannan core on the biosynthetic pathway to mature Lipoarabinomannan (LAM). The polypeptide is Polyprenol-phosphate-mannose-dependent alpha-(1-2)-phosphatidylinositol mannoside mannosyltransferase (Mycolicibacterium smegmatis (strain ATCC 700084 / mc(2)155) (Mycobacterium smegmatis)).